The chain runs to 148 residues: IPYNPQSQGVVESMNKELKKIIGQVRDQAEHLKTAVQMAVFIHNFKRKGGIGGYSAGERIIDIIATDIQTKELQKQITKIQNFRVYYRDSRDPIWKGPAKLLWKGEGAVVIQDNSDIKVVPRRKVKIIRDYGKQMAGDDCVASRQDED.

Residues Ile1–Ile64 form the Integrase catalytic domain. Mg(2+) is bound at residue Glu12. Residues Phe83 to Asp130 constitute a DNA-binding region (integrase-type).

Homotetramer; may further associate as a homohexadecamer. Part of the pre-integration complex (PIC) which is composed of viral genome, matrix protein, Vpr and integrase. Interacts with human SMARCB1/INI1 and human PSIP1/LEDGF isoform 1. Interacts with human KPNA3; this interaction might play a role in nuclear import of the pre-integration complex. Interacts with human NUP153; this interaction might play a role in nuclear import of the pre-integration complex. Post-translationally, specific enzymatic cleavages by the viral protease yield mature proteins.

Functionally, catalyzes viral DNA integration into the host chromosome, by performing a series of DNA cutting and joining reactions. This enzyme activity takes place after virion entry into a cell and reverse transcription of the RNA genome in dsDNA. The first step in the integration process is 3' processing. This step requires a complex comprising the viral genome, matrix protein, Vpr and integrase. This complex is called the pre-integration complex (PIC). The integrase protein removes 2 nucleotides from each 3' end of the viral DNA, leaving recessed CA OH's at the 3' ends. In the second step, the PIC enters cell nucleus. This process is mediated through integrase and Vpr proteins, and allows the virus to infect a non dividing cell. This ability to enter the nucleus is specific of lentiviruses, other retroviruses cannot and rely on cell division to access cell chromosomes. In the third step, termed strand transfer, the integrase protein joins the previously processed 3' ends to the 5' ends of strands of target cellular DNA at the site of integration. The 5'-ends are produced by integrase-catalyzed staggered cuts, 5 bp apart. A Y-shaped, gapped, recombination intermediate results, with the 5'-ends of the viral DNA strands and the 3' ends of target DNA strands remaining unjoined, flanking a gap of 5 bp. The last step is viral DNA integration into host chromosome. This involves host DNA repair synthesis in which the 5 bp gaps between the unjoined strands are filled in and then ligated. Since this process occurs at both cuts flanking the HIV genome, a 5 bp duplication of host DNA is produced at the ends of HIV-1 integration. Alternatively, Integrase may catalyze the excision of viral DNA just after strand transfer, this is termed disintegration. This Homo sapiens (Human) protein is Gag-Pol polyprotein (gag-pol).